The following is a 386-amino-acid chain: Aspartate carbamoyltransferase 1, chloroplastic (386 aa).

The N-terminal 39 residues, 1–39 (MTVASMLSSNSMNVGVSNPKMSSKTSACCLLNRPWPSSC), are a transit peptide targeting the chloroplast. Residues Arg-132 and Thr-133 each coordinate carbamoyl phosphate. UMP is bound by residues Arg-132 and Thr-133. Lys-162 provides a ligand contact to L-aspartate. The carbamoyl phosphate site is built by Arg-183, His-211, and Gln-214. UMP is bound by residues Arg-183 and His-211. Residues Arg-244 and Arg-306 each coordinate UMP. Arg-244 and Arg-306 together coordinate L-aspartate. Carbamoyl phosphate is bound by residues Leu-346 and Pro-347.

Belongs to the aspartate/ornithine carbamoyltransferase superfamily. ATCase family. In terms of assembly, homotrimer.

The protein localises to the plastid. It is found in the chloroplast. It catalyses the reaction carbamoyl phosphate + L-aspartate = N-carbamoyl-L-aspartate + phosphate + H(+). The protein operates within pyrimidine metabolism; UMP biosynthesis via de novo pathway; (S)-dihydroorotate from bicarbonate: step 2/3. With respect to regulation, feedback inhibited by UMP. Its function is as follows. Catalyzes the condensation of carbamoyl phosphate and aspartate to form carbamoyl aspartate and inorganic phosphate, the committed step in the de novo pyrimidine nucleotide biosynthesis pathway. The sequence is that of Aspartate carbamoyltransferase 1, chloroplastic (PYRB1) from Pisum sativum (Garden pea).